We begin with the raw amino-acid sequence, 290 residues long: 4-hydroxybenzoate octaprenyltransferase (290 aa).

Transmembrane regions (helical) follow at residues 38–58, 99–119, 141–161, 213–233, 238–258, and 268–288; these read LAGMAIPALGTLTVFILGVFF, LFGALVGISFALVLTLNSMTI, LPQLVLGAAFGWSIPMVFTAV, LIIGLLQLATLLLLGVIGWQL, IYYLALAGAAGLFLWQQKLIV, and AFLNNNLVGMLIFVGILLSLL.

This sequence belongs to the UbiA prenyltransferase family. Mg(2+) serves as cofactor.

It is found in the cell inner membrane. It catalyses the reaction all-trans-octaprenyl diphosphate + 4-hydroxybenzoate = 4-hydroxy-3-(all-trans-octaprenyl)benzoate + diphosphate. It participates in cofactor biosynthesis; ubiquinone biosynthesis. Its function is as follows. Catalyzes the prenylation of para-hydroxybenzoate (PHB) with an all-trans polyprenyl group. Mediates the second step in the final reaction sequence of ubiquinone-8 (UQ-8) biosynthesis, which is the condensation of the polyisoprenoid side chain with PHB, generating the first membrane-bound Q intermediate 3-octaprenyl-4-hydroxybenzoate. The chain is 4-hydroxybenzoate octaprenyltransferase from Sodalis glossinidius (strain morsitans).